The primary structure comprises 190 residues: Natural killer cells antigen CD94 (190 aa).

Topologically, residues 1-10 (MAAFRTTAWR) are cytoplasmic. A helical; Signal-anchor for type II membrane protein transmembrane segment spans residues 11 to 31 (LISGVLGVICLVLMAALGVLL). The Extracellular portion of the chain corresponds to 32-190 (KNSLTKRSVQ…FRYICKQQLI (159 aa)). Disulfide bonds link cysteine 69–cysteine 81, cysteine 72–cysteine 83, cysteine 100–cysteine 185, and cysteine 163–cysteine 177. A C-type lectin domain is found at 79–186 (YQCNCYFISN…CEKKFRYICK (108 aa)). N-linked (GlcNAc...) asparagine glycans are attached at residues asparagine 104 and asparagine 144.

As to quaternary structure, can form disulfide-bonded heterodimer with NKG2 family members KLRC1 and KLRC2. KLRD1-KLRC1 heterodimer interacts with peptide-bound MHC-E-B2M heterotrimeric complex. KLRD1 plays a prominent role in directly interacting with MHC-E. KLRD1-KLRC1 interacts with much higher affinity with peptide-bound MHC-E-B2M than KLRD1-KLRC2. Interacts with the adapter protein TYROBP/DAP12; this interaction is required for cell surface expression and cell activation.

The protein localises to the cell membrane. In terms of biological role, immune receptor involved in self-nonself discrimination. In complex with KLRC1 or KLRC2 on cytotoxic and regulatory lymphocyte subsets, recognizes non-classical major histocompatibility (MHC) class Ib molecule MHC-E loaded with self-peptides derived from the signal sequence of classical MHC class Ia and non-classical MHC class Ib molecules. Enables cytotoxic cells to monitor the expression of MHC class I molecules in healthy cells and to tolerate self. Primarily functions as a ligand binding subunit as it lacks the capacity to signal. KLRD1-KLRC1 acts as an immune inhibitory receptor. Key inhibitory receptor on natural killer (NK) cells that regulates their activation and effector functions. Dominantly counteracts T cell receptor signaling on a subset of memory/effector CD8-positive T cells as part of an antigen-driven response to avoid autoimmunity. On intraepithelial CD8-positive gamma-delta regulatory T cells triggers TGFB1 secretion, which in turn limits the cytotoxic programming of intraepithelial CD8-positive alpha-beta T cells, distinguishing harmless from pathogenic antigens. In MHC-E-rich tumor microenvironment, acts as an immune inhibitory checkpoint and may contribute to progressive loss of effector functions of NK cells and tumor-specific T cells, a state known as cell exhaustion. Upon MHC-E-peptide binding, transmits intracellular signals through KLRC1 immunoreceptor tyrosine-based inhibition motifs (ITIMs) by recruiting INPP5D/SHIP-1 and INPPL1/SHIP-2 tyrosine phosphatases to ITIMs, and ultimately opposing signals transmitted by activating receptors through dephosphorylation of proximal signaling molecules. Its function is as follows. KLRD1-KLRC2 acts as an immune activating receptor. On cytotoxic lymphocyte subsets recognizes MHC-E loaded with signal sequence-derived peptides from non-classical MHC class Ib MHC-G molecules, likely playing a role in the generation and effector functions of adaptive NK cells and in maternal-fetal tolerance during pregnancy. Regulates the effector functions of terminally differentiated cytotoxic lymphocyte subsets, and in particular may play a role in adaptive NK cell response to viral infection. Upon MHC-E-peptide binding, transmits intracellular signals via the adapter protein TYROBP/DAP12, triggering the phosphorylation of proximal signaling molecules and cell activation. This chain is Natural killer cells antigen CD94 (KLRD1), found in Bos taurus (Bovine).